The sequence spans 80 residues: Small ribosomal subunit protein uS17 (80 aa).

It belongs to the universal ribosomal protein uS17 family. Part of the 30S ribosomal subunit.

Its function is as follows. One of the primary rRNA binding proteins, it binds specifically to the 5'-end of 16S ribosomal RNA. This Beijerinckia indica subsp. indica (strain ATCC 9039 / DSM 1715 / NCIMB 8712) protein is Small ribosomal subunit protein uS17.